The following is a 1410-amino-acid chain: MAPPFVFPQILRALEEDPEDNHRLFAQNPVDVTSLRPSDLEEFVKGVSFDLSDRELFCVEDQDVFDRVYSLVRSFFSLPPSCKCNLVESLRSNLSVLLPNVDSISRSVQDQEDDVPIIDRITSHRNALKIYTFFLLTVVMNEESHISSVETTKVAARGRKKQIIQSWNWEPQRGRMLNLIANSLEINLSLLFGSSDLDENYLSFIVKNSFTLFENATILKDAETKDALCRIIGASATKYHYIVQSCASIMHLIHKYDFAVVHIADAVARAESKYSDGTLAVTIIRDIGRTDPKAYVKDTAGADNVGRFLVELADRLPKLMSTNVGVLVPHFGGESYKIRNALVGVLGKLVAKAFNDVEGDMSSKSLRLRTKQAMLEILLERCRDVSAYTRSRVLQVWAELCEEHSVSIGLWNEVASLSAGRLEDKSAIVRKSALNLLIMMLQHNPFGPQLRIASFEATLEQYKRKLNELEPTEHASKESTSDGESCNGDGEIDDLHLETTTKIHQDSLSDSCQPENGEEISEKDVSVPDIGNVEQTKALIASLEAGLRFSKCMSASMPILVQLMASSSATDVENAILLLMRCKQFQIDGAEACLRKILPLAFSQDKSIYEAVENAFISIYIRKNPVDTAKQLLNLAIDSNIGDQAALEFIVNALVSKGEISSSTTSALWDFFCFNINGTTAEQSRGALSILCMAAKSSPRILGSHIQDIIDIGFGRWAKVEPLLARTACTVIQRFSEEDRKKLLLSSGSRLFGILESLITGNWLPENIYYATADKAISAIYMIHPTPETLASTIIKKSLSTVFDVVEQEEAQTDTENNKVDILTPVQVAKLSRFLFAVSHIAMNQLVYIESCIQKIRRQKTKKDKPAAESQNTEENLEATQENNGINAELGLAASDDALLDTLAERAEREIVSGGSVEKNLIGECATFLSKLCRNFSLLQKHPELQASAMLALCRFMIIDASFCESNLQLLFTVVENAPSEVVRSNCTLSLGDLAVRFPNLLEPWTENMYARLRDASVSVRKNAVLVLSHLILNDMMKVKGYIYEMAICIEDDVERISSLAKLFFHELSKKGSNPIYNLLPDILGQLSNRNLERESFCNVMQFLIGSIKKDKQMEALVEKLCNRFSGVTDGKQWEYISYSLSLLTFTEKGIKKLIESFKSYEHALAEDLVTENFRSIINKGKKFAKPELKACIEEFEEKINKFHMEKKEQEETARNAEVHREKTKTMESLAVLSKVKEEPVEEYDEGEGVSDSEIVDPSMEESGDNLVETESEEEPSDSEEEPDSAQCGTAIPRYLNQKTSGDNLIETEPEEEQSDSEPDSAQCGTTNPRSLNRKTSGDNLIETESEEEQSDSEEEPSDSEEEPDSAQCGTTNPRSLNQKTSGGEEGESESKSTESSSSIRRNLRSGSRS.

Residues 469–480 (LEPTEHASKEST) show a composition bias toward basic and acidic residues. Disordered regions lie at residues 469 to 492 (LEPT…DGEI), 504 to 525 (HQDS…EKDV), 860 to 879 (KTKK…NLEA), and 1208 to 1410 (KEQE…GSRS). Residues 869–879 (ESQNTEENLEA) are compositionally biased toward polar residues. Residues 1208–1226 (KEQEETARNAEVHREKTKT) show a composition bias toward basic and acidic residues. Composition is skewed to acidic residues over residues 1240-1284 (PVEE…EEPD) and 1306-1319 (IETE…DSEP). Positions 1323–1339 (QCGTTNPRSLNRKTSGD) are enriched in polar residues. Over residues 1342–1365 (IETESEEEQSDSEEEPSDSEEEPD) the composition is skewed to acidic residues. Positions 1368–1379 (QCGTTNPRSLNQ) are enriched in polar residues.

Belongs to the CND1 (condensin subunit 1) family. In terms of assembly, component of the condensin complex. Present in buds.

The protein localises to the chromosome. Its subcellular location is the nucleus. Essential protein. Regulatory subunit of the condensin complex, a complex required for conversion of interphase chromatin into mitotic-like condense chromosomes. The condensin complex probably introduces positive supercoils into relaxed DNA in the presence of type I topoisomerases and converts nicked DNA into positive knotted forms in the presence of type II topoisomerases. Required for fertility, growth and euchromatin organization, but not for sister chromatid cohesion. Necessary to maintain normal structural integrity of the meiotic chromosomes during the two nuclear divisions of gametogenesis, especially to maintain compaction of the centromeric repeats and 45S rDNA. Also seems to be involved in crossover formation during meiotic prophase I. Prevents centromeric and pericentromeric heterochromatin repeats association. Contributes to the induction of stress-responsive genes in response to stress treatment. The polypeptide is Condensin-1 complex subunit CAP-D2 (Arabidopsis thaliana (Mouse-ear cress)).